We begin with the raw amino-acid sequence, 180 residues long: Translation initiation factor IF-3 (180 aa).

Belongs to the IF-3 family. In terms of assembly, monomer.

The protein resides in the cytoplasm. IF-3 binds to the 30S ribosomal subunit and shifts the equilibrium between 70S ribosomes and their 50S and 30S subunits in favor of the free subunits, thus enhancing the availability of 30S subunits on which protein synthesis initiation begins. In Caldanaerobacter subterraneus subsp. tengcongensis (strain DSM 15242 / JCM 11007 / NBRC 100824 / MB4) (Thermoanaerobacter tengcongensis), this protein is Translation initiation factor IF-3.